The following is a 112-amino-acid chain: CRISPR-associated endoribonuclease Cas2 2 (112 aa).

Position 15 (D15) interacts with Mg(2+).

The protein belongs to the CRISPR-associated endoribonuclease Cas2 protein family. Homodimer, forms a heterotetramer with a Cas1 homodimer. The cofactor is Mg(2+).

Functionally, CRISPR (clustered regularly interspaced short palindromic repeat), is an adaptive immune system that provides protection against mobile genetic elements (viruses, transposable elements and conjugative plasmids). CRISPR clusters contain sequences complementary to antecedent mobile elements and target invading nucleic acids. CRISPR clusters are transcribed and processed into CRISPR RNA (crRNA). Functions as a ssRNA-specific endoribonuclease. Involved in the integration of spacer DNA into the CRISPR cassette. The chain is CRISPR-associated endoribonuclease Cas2 2 from Rhodospirillum rubrum (strain ATCC 11170 / ATH 1.1.1 / DSM 467 / LMG 4362 / NCIMB 8255 / S1).